The primary structure comprises 277 residues: Large ribosomal subunit protein uL2m (277 aa).

The segment at 225-263 is disordered; sequence AMNPVDHPHGGGEGKTSGGRPSVTPWSWPTKGQPTRSKR. The segment covering 248–259 has biased composition (polar residues); sequence TPWSWPTKGQPT.

It belongs to the universal ribosomal protein uL2 family.

It is found in the mitochondrion. In Reclinomonas americana, this protein is Large ribosomal subunit protein uL2m (RPL2).